A 67-amino-acid chain; its full sequence is Probable Sec-independent protein translocase protein TatE (67 aa).

Residues 1–21 (MGEISITKLLVVAALVVLLFG) form a helical membrane-spanning segment. The interval 45–67 (DEDAGAKKDANGDLPAEKLTHKE) is disordered.

Belongs to the TatA/E family. TatE subfamily.

It is found in the cell inner membrane. Functionally, part of the twin-arginine translocation (Tat) system that transports large folded proteins containing a characteristic twin-arginine motif in their signal peptide across membranes. TatE shares overlapping functions with TatA. The polypeptide is Probable Sec-independent protein translocase protein TatE (Escherichia fergusonii (strain ATCC 35469 / DSM 13698 / CCUG 18766 / IAM 14443 / JCM 21226 / LMG 7866 / NBRC 102419 / NCTC 12128 / CDC 0568-73)).